Consider the following 98-residue polypeptide: Small ribosomal subunit protein bS16 (98 aa).

It belongs to the bacterial ribosomal protein bS16 family.

This is Small ribosomal subunit protein bS16 from Pseudothermotoga lettingae (strain ATCC BAA-301 / DSM 14385 / NBRC 107922 / TMO) (Thermotoga lettingae).